We begin with the raw amino-acid sequence, 490 residues long: Hydroxysteroid dehydrogenase-like protein 2 (490 aa).

Residues 17–23 (GASRGIG), Lys-42, and Asp-74 each bind NADP(+). Residue Lys-42 is modified to N6-(2-hydroxyisobutyryl)lysine. N6-acetyllysine is present on Lys-116. The active-site Proton acceptor is Tyr-168. Lys-172 contacts NADP(+). Residues 282–301 (MEEKESNDSVPEVKEEKLQL) show a composition bias toward basic and acidic residues. The disordered stretch occupies residues 282–370 (MEEKESNDSV…PRQQPQPFVQ (89 aa)). Residues 302–367 (QEESQLQKQP…QPRPRQQPQP (66 aa)) are compositionally biased toward low complexity. Positions 380-487 (GAVEETFRIV…KLEKLMTQMN (108 aa)) constitute an SCP2 domain. Lys-390 is subject to N6-succinyllysine.

It belongs to the short-chain dehydrogenases/reductases (SDR) family. In terms of tissue distribution, widely expressed.

Its subcellular location is the peroxisome. It is found in the mitochondrion. Its function is as follows. Has apparently no steroid dehydrogenase activity. Controls bile acid (BA) and lipid metabolism in response to nutritional cues. This chain is Hydroxysteroid dehydrogenase-like protein 2 (Hsdl2), found in Mus musculus (Mouse).